Reading from the N-terminus, the 1039-residue chain is Probable calcium-transporting ATPase 9, plasma membrane-type (1039 aa).

Residues 1–175 (MEKLDRYLQE…FVWDALQDMT (175 aa)) lie on the Cytoplasmic side of the membrane. The next 2 membrane-spanning stretches (helical) occupy residues 176 to 196 (LIILMVCALLSVAVGLATEGW) and 199 to 219 (GMYDGLGIILSIFLVVMVTAV). The Cytoplasmic segment spans residues 220 to 250 (SDYKQSLQFKELDNEKKKIFIHVTRDGRRQK). Helical transmembrane passes span 251-271 (ISIYDLVVGDIVHLSIGDQVP) and 353-373 (VATIIGKIGLVFAILTFLVLL). Topologically, residues 374-406 (VRFLIDKGMTVGLLKWYSTDALTIVNYFATAVT) are cytoplasmic. The helical transmembrane segment at 407 to 427 (IIVVAVPEGLPLAVTLSLAFA) threads the bilayer. Residue D456 is the 4-aspartylphosphate intermediate of the active site. D758 and D762 together coordinate Mg(2+). Residues 825 to 845 (IVALVINFVSACIIGSAPLTA) traverse the membrane as a helical segment. At 846-847 (VQ) the chain is on the cytoplasmic side. The next 2 membrane-spanning stretches (helical) occupy residues 848–868 (LLWVNMIMDTLGALALATEPP) and 892–912 (NIMGQSLYQLFVLGALMFGGE). The Cytoplasmic segment spans residues 913–960 (RLLNIKGADSKSIINTLIFNSFVFCQVFNEINSREMQKINVFRGIISN). 2 helical membrane-spanning segments follow: residues 961–981 (WIFIAVIAATVAFQVVIIEFL) and 995–1015 (WLLSVGLGSISLIVGVILKCI). The Cytoplasmic segment spans residues 1016-1039 (PVGSGETSATPNGYRPLANGPDDI).

This sequence belongs to the cation transport ATPase (P-type) (TC 3.A.3) family. Type IIB subfamily.

The protein resides in the membrane. The catalysed reaction is Ca(2+)(in) + ATP + H2O = Ca(2+)(out) + ADP + phosphate + H(+). Its activity is regulated as follows. Activated by calmodulin. Its function is as follows. This magnesium-dependent enzyme catalyzes the hydrolysis of ATP coupled with the translocation of calcium from the cytosol out of the cell, into the endoplasmic reticulum, or into organelles. In Oryza sativa subsp. japonica (Rice), this protein is Probable calcium-transporting ATPase 9, plasma membrane-type.